The sequence spans 293 residues: MKGLLSVAALSLAVSEVSAHYIFQQLSTGSTKHGVFQYIRQNTNYNSPVTDLSSNDLRCNEGGASGANTQTVTVRAGDSFTFHLDTPVYHQGPVSVYLSKAPGSASSYDGSGTWFKIKDWGPTFPGGQWTLAGSYTAQLPSCITDGEYLLRIQSLGIHNPYPAGTPQFYISCAQIKVTGGGSVNPSGVAIPGAFKATDPGYTANIYSNFNSYTVPGPSVFSCGSNGGGSSPVEPQPQPTTTLVTSTRAPVATQPAGCAVAKWGQCGGNGWTGCTTCAAGSTCNTQNAYYHQCV.

Positions 1–19 (MKGLLSVAALSLAVSEVSA) are cleaved as a signal peptide. Cu(2+) contacts are provided by His-20 and His-90. Residues Cys-59 and Cys-172 are joined by a disulfide bond. Positions 158 and 167 each coordinate O2. Tyr-169 provides a ligand contact to Cu(2+). Positions 257 to 293 (CAVAKWGQCGGNGWTGCTTCAAGSTCNTQNAYYHQCV) constitute a CBM1 domain.

It belongs to the polysaccharide monooxygenase AA9 family. Requires Cu(2+) as cofactor.

The protein localises to the secreted. The catalysed reaction is [(1-&gt;4)-beta-D-glucosyl]n+m + reduced acceptor + O2 = 4-dehydro-beta-D-glucosyl-[(1-&gt;4)-beta-D-glucosyl]n-1 + [(1-&gt;4)-beta-D-glucosyl]m + acceptor + H2O.. Its activity is regulated as follows. Glucose dehydrogenase and aryl-alcohol quinone oxidoreductases regulate the oxidative degradation of cellulose since they can act as catalytically efficient electron donors for LPMO9E. Lytic polysaccharide monooxygenase (LPMO) that depolymerizes crystalline and amorphous polysaccharides via the oxidation of scissile alpha- or beta-(1-4)-glycosidic bonds, yielding only C1 oxidation products. Catalysis by LPMOs requires the reduction of the active-site copper from Cu(II) to Cu(I) by a reducing agent and H(2)O(2) or O(2) as a cosubstrate. Improves the progression of lytic enzymes in delignified miscanthus cell walls. This boosting effect dependents on the cellular type which indicates contrasted recalcitrance levels in plant tissues. This is AA9 family lytic polysaccharide monooxygenase E from Podospora anserina (strain S / ATCC MYA-4624 / DSM 980 / FGSC 10383) (Pleurage anserina).